The chain runs to 291 residues: UDP-N-acetylenolpyruvoylglucosamine reductase (291 aa).

The 166-residue stretch at 22–187 folds into the FAD-binding PCMH-type domain; the sequence is RIGGPARYFK…ASATFQLTKD (166 aa). Residue Arg-166 is part of the active site. Cys-214 serves as the catalytic Proton donor. Glu-283 is an active-site residue.

This sequence belongs to the MurB family. FAD serves as cofactor.

The protein localises to the cytoplasm. The enzyme catalyses UDP-N-acetyl-alpha-D-muramate + NADP(+) = UDP-N-acetyl-3-O-(1-carboxyvinyl)-alpha-D-glucosamine + NADPH + H(+). It participates in cell wall biogenesis; peptidoglycan biosynthesis. In terms of biological role, cell wall formation. This chain is UDP-N-acetylenolpyruvoylglucosamine reductase, found in Chlamydia trachomatis serovar L2 (strain ATCC VR-902B / DSM 19102 / 434/Bu).